The sequence spans 214 residues: Small ribosomal subunit protein uS3c (214 aa).

Residues 39–111 (IRTYIHTISK…QLTINVLEVE (73 aa)) form the KH type-2 domain.

This sequence belongs to the universal ribosomal protein uS3 family. As to quaternary structure, part of the 30S ribosomal subunit.

The protein localises to the plastid. It is found in the chloroplast. The protein is Small ribosomal subunit protein uS3c (rps3) of Phaeodactylum tricornutum (strain CCAP 1055/1).